We begin with the raw amino-acid sequence, 373 residues long: Carboxylesterase/phospholipase LipF (373 aa).

Residues 116–118 (HGG) carry the Involved in the stabilization of the negatively charged intermediate by the formation of the oxyanion hole motif. Residues serine 186, glutamate 285, and histidine 315 contribute to the active site.

Belongs to the 'GDXG' lipolytic enzyme family.

The enzyme catalyses a carboxylic ester + H2O = an alcohol + a carboxylate + H(+). It carries out the reaction a 1,2-diacyl-sn-glycero-3-phosphocholine + H2O = phosphocholine + a 1,2-diacyl-sn-glycerol + H(+). Functionally, a short-chain esterase and phospholipase. This Mycobacterium tuberculosis (strain CDC 1551 / Oshkosh) protein is Carboxylesterase/phospholipase LipF.